The following is a 256-amino-acid chain: DNA repair protein RecO (256 aa).

Belongs to the RecO family.

In terms of biological role, involved in DNA repair and RecF pathway recombination. This chain is DNA repair protein RecO, found in Thiobacillus denitrificans (strain ATCC 25259 / T1).